Consider the following 177-residue polypeptide: Interleukin-25 (177 aa).

The first 32 residues, 1 to 32 (MRERPRLGEDSSLISLFLQVVAFLAMVMGTHT), serve as a signal peptide directing secretion. Residues 58–81 (PVPPLEPARPNRHPESCRASEDGP) are disordered. Positions 69-78 (RHPESCRASE) are enriched in basic and acidic residues. 2 cysteine pairs are disulfide-bonded: Cys110–Cys168 and Cys115–Cys170. N-linked (GlcNAc...) asparagine glycosylation occurs at Asn136.

This sequence belongs to the IL-17 family. As to expression, expressed at low levels in several tissues, including brain, kidney, lung, prostate, testis, spinal cord, adrenal gland, and trachea.

The protein localises to the secreted. In terms of biological role, cytokine produced by various cells such as eosinophils, T-helper type 2 (Th2) cells or epithelial cells that plays a role in internal safety of adaptive immune responses by regulating cytokine production. Promotes and augments T-helper type 2 responses locally or systemically. Exerts its activity via its receptor composed of IL17RA and IL17RB for signal transduction. In turn, stimulates the JAK2-STAT5A pathway and promotes the secretion of type-2 associated cytokines including IL4, IL9 and IL13. Also induces the release of IL8, and IL6 from eosinophils through the combined activation of MAPK and NF-kappa-B pathways. Inhibits the differentiation of T-helper (Th17) cells via the production of IL4, IL5 and IL13. The sequence is that of Interleukin-25 (IL25) from Homo sapiens (Human).